The sequence spans 335 residues: V-set and immunoglobulin domain-containing protein 1 (335 aa).

The signal sequence occupies residues 1-21 (MFPTMLKIFPILATLAGHVHG). Residues 22–136 (VVVTVPEKTV…SQKSVIVNVL (115 aa)) enclose the Ig-like V-type domain. At 22–233 (VVVTVPEKTV…DLTSMHSDGN (212 aa)) the chain is on the extracellular side. Cystine bridges form between Cys-43–Cys-115 and Cys-160–Cys-210. An Ig-like C2-type domain is found at 139 to 226 (PSKPFCKIEG…GNSTCELDLT (88 aa)). The chain crosses the membrane as a helical span at residues 234-254 (IVAGALIGAILAAVIICAIVW). Topologically, residues 255–335 (VLTKKAKKKK…QKEETAGSSF (81 aa)) are cytoplasmic. The disordered stretch occupies residues 266–335 (SSNEMQVMAQ…QKEETAGSSF (70 aa)). The span at 268–306 (NEMQVMAQKQSNAEYAQVPNEENTPATAVLPSNATNEQP) shows a compositional bias: polar residues. Basic and acidic residues predominate over residues 319 to 335 (NDEKHEVQKEETAGSSF).

In terms of tissue distribution, expressed in thymocytes.

The protein localises to the membrane. This is V-set and immunoglobulin domain-containing protein 1 (VSIG1) from Gallus gallus (Chicken).